The primary structure comprises 278 residues: HTH-type transcriptional activator RhaS (278 aa).

An HTH araC/xylS-type domain is found at 174–272 (NLLLAWLEDH…NWSPRDIRQG (99 aa)). DNA-binding regions (H-T-H motif) lie at residues 191–212 (DAVA…KQKT) and 239–262 (VTDI…RREF).

Binds DNA as a dimer.

It localises to the cytoplasm. In terms of biological role, activates expression of the rhaBAD and rhaT operons. The chain is HTH-type transcriptional activator RhaS from Escherichia coli O45:K1 (strain S88 / ExPEC).